The sequence spans 348 residues: MSDRLTLLRPDDWHIHLRDGAVLPHTVGDAARTFGRAIIMPNLVPPVRNAAEADAYRQRILAARPAGSRFEPLMVLYLTDNTSPEDVRAAKASGFVHAAKLYPAGATTNSDSGVTSIDKIFPALEAMAEVGMLLLVHGEVTRAEIDVFDREKAFIDEHLTRVVERFPTLKVVFEHITTRDAVQFVEAASANVGATITAHHLLYNRNHMLVGGIRPHFYCLPILKRNVHQEALLDAATSGNVKFFLGTDSAPHAKHAKEAACGCAGCYTAFAAIELYAEAFEQRNALDKLEAFASFHGPDFYGLPRNTDSITLVREEWTVPASLPLGENSVVPLRAGETLRWKLLEGQA.

His14 and His16 together coordinate Zn(2+). Substrate contacts are provided by residues 16-18 (HLR) and Asn42. Residues Lys100, His137, and His175 each coordinate Zn(2+). Residue Lys100 is modified to N6-carboxylysine. Residue His137 coordinates substrate. Leu220 is a binding site for substrate. Zn(2+) is bound at residue Asp248. Residue Asp248 is part of the active site. His252 and Ala264 together coordinate substrate.

It belongs to the metallo-dependent hydrolases superfamily. DHOase family. Class II DHOase subfamily. As to quaternary structure, homodimer. Requires Zn(2+) as cofactor.

It carries out the reaction (S)-dihydroorotate + H2O = N-carbamoyl-L-aspartate + H(+). It functions in the pathway pyrimidine metabolism; UMP biosynthesis via de novo pathway; (S)-dihydroorotate from bicarbonate: step 3/3. In terms of biological role, catalyzes the reversible cyclization of carbamoyl aspartate to dihydroorotate. The polypeptide is Dihydroorotase (Ectopseudomonas mendocina (strain ymp) (Pseudomonas mendocina)).